The chain runs to 378 residues: Queuine tRNA-ribosyltransferase (378 aa).

Aspartate 92 acts as the Proton acceptor in catalysis. Residues 92–96 (DSGGF), aspartate 146, glutamine 188, and glycine 215 contribute to the substrate site. Residues 246-252 (GVGTHLE) form an RNA binding region. Aspartate 265 (nucleophile) is an active-site residue. Residues 270–274 (TRLAR) are RNA binding; important for wobble base 34 recognition. Zn(2+) contacts are provided by cysteine 303, cysteine 305, cysteine 308, and histidine 334.

Belongs to the queuine tRNA-ribosyltransferase family. Homodimer. Within each dimer, one monomer is responsible for RNA recognition and catalysis, while the other monomer binds to the replacement base PreQ1. Requires Zn(2+) as cofactor.

The enzyme catalyses 7-aminomethyl-7-carbaguanine + guanosine(34) in tRNA = 7-aminomethyl-7-carbaguanosine(34) in tRNA + guanine. It functions in the pathway tRNA modification; tRNA-queuosine biosynthesis. In terms of biological role, catalyzes the base-exchange of a guanine (G) residue with the queuine precursor 7-aminomethyl-7-deazaguanine (PreQ1) at position 34 (anticodon wobble position) in tRNAs with GU(N) anticodons (tRNA-Asp, -Asn, -His and -Tyr). Catalysis occurs through a double-displacement mechanism. The nucleophile active site attacks the C1' of nucleotide 34 to detach the guanine base from the RNA, forming a covalent enzyme-RNA intermediate. The proton acceptor active site deprotonates the incoming PreQ1, allowing a nucleophilic attack on the C1' of the ribose to form the product. After dissociation, two additional enzymatic reactions on the tRNA convert PreQ1 to queuine (Q), resulting in the hypermodified nucleoside queuosine (7-(((4,5-cis-dihydroxy-2-cyclopenten-1-yl)amino)methyl)-7-deazaguanosine). The protein is Queuine tRNA-ribosyltransferase of Thermosynechococcus vestitus (strain NIES-2133 / IAM M-273 / BP-1).